Here is a 331-residue protein sequence, read N- to C-terminus: Ketol-acid reductoisomerase (NADP(+)) (331 aa).

The KARI N-terminal Rossmann domain occupies 2-181; sequence IKKYYESDAD…GATRAVVFET (180 aa). NADP(+)-binding positions include 25–28, R48, S52, and 82–85; these read YGSQ and DESQ. H107 is a catalytic residue. Position 133 (G133) interacts with NADP(+). Residues 182–327 enclose the KARI C-terminal knotted domain; the sequence is TFREETETDL…AEIRGLMPQF (146 aa). Residues D190, E194, E226, and E230 each coordinate Mg(2+). Substrate is bound at residue S251.

It belongs to the ketol-acid reductoisomerase family. Requires Mg(2+) as cofactor.

It carries out the reaction (2R)-2,3-dihydroxy-3-methylbutanoate + NADP(+) = (2S)-2-acetolactate + NADPH + H(+). It catalyses the reaction (2R,3R)-2,3-dihydroxy-3-methylpentanoate + NADP(+) = (S)-2-ethyl-2-hydroxy-3-oxobutanoate + NADPH + H(+). It functions in the pathway amino-acid biosynthesis; L-isoleucine biosynthesis; L-isoleucine from 2-oxobutanoate: step 2/4. The protein operates within amino-acid biosynthesis; L-valine biosynthesis; L-valine from pyruvate: step 2/4. Involved in the biosynthesis of branched-chain amino acids (BCAA). Catalyzes an alkyl-migration followed by a ketol-acid reduction of (S)-2-acetolactate (S2AL) to yield (R)-2,3-dihydroxy-isovalerate. In the isomerase reaction, S2AL is rearranged via a Mg-dependent methyl migration to produce 3-hydroxy-3-methyl-2-ketobutyrate (HMKB). In the reductase reaction, this 2-ketoacid undergoes a metal-dependent reduction by NADPH to yield (R)-2,3-dihydroxy-isovalerate. This Methanosphaerula palustris (strain ATCC BAA-1556 / DSM 19958 / E1-9c) protein is Ketol-acid reductoisomerase (NADP(+)).